The following is a 175-amino-acid chain: MAEQDWIIIGQVVAAQGLKGEVRINPSTDFPERFEVPGQRWLQLPNQDPQSVELERGRQIPGKNLFVVKFEHIQDRTQAENIRGAKVLVRAGDRPELEADEYHVSDLIGLEVFDYNTQAKLGIVSDLYTAAQDVLEVTDANQKKHLVPFVKAIVPVVDLVENRLEVDAPPGLFEI.

The 74-residue stretch at 99 to 172 (ADEYHVSDLI…RLEVDAPPGL (74 aa)) folds into the PRC barrel domain.

This sequence belongs to the RimM family. As to quaternary structure, binds ribosomal protein uS19.

It localises to the cytoplasm. An accessory protein needed during the final step in the assembly of 30S ribosomal subunit, possibly for assembly of the head region. Essential for efficient processing of 16S rRNA. May be needed both before and after RbfA during the maturation of 16S rRNA. It has affinity for free ribosomal 30S subunits but not for 70S ribosomes. This chain is Ribosome maturation factor RimM, found in Picosynechococcus sp. (strain ATCC 27264 / PCC 7002 / PR-6) (Agmenellum quadruplicatum).